Reading from the N-terminus, the 1498-residue chain is DNA-directed RNA polymerase subunit beta' (1498 aa).

Zn(2+)-binding residues include C67, C69, C82, and C85. Residues D499, D501, and D503 each coordinate Mg(2+). 4 residues coordinate Zn(2+): C867, C943, C950, and C953.

This sequence belongs to the RNA polymerase beta' chain family. The RNAP catalytic core consists of 2 alpha, 1 beta, 1 beta' and 1 omega subunit. When a sigma factor is associated with the core the holoenzyme is formed, which can initiate transcription. Requires Mg(2+) as cofactor. It depends on Zn(2+) as a cofactor.

It carries out the reaction RNA(n) + a ribonucleoside 5'-triphosphate = RNA(n+1) + diphosphate. In terms of biological role, DNA-dependent RNA polymerase catalyzes the transcription of DNA into RNA using the four ribonucleoside triphosphates as substrates. The chain is DNA-directed RNA polymerase subunit beta' from Chlorobium phaeobacteroides (strain BS1).